We begin with the raw amino-acid sequence, 79 residues long: Morintide mO2 (79 aa).

Residues 1 to 20 (MAKLSFLSLFLLCLVATATA) form the signal peptide. A Chitin-binding type-1 domain is found at 21 to 63 (QNCGRQAGNRACANGLCCSQYGFCGSTSEYCSRANGCQSNCRG). Cystine bridges form between Cys23-Cys38, Cys32-Cys44, Cys37-Cys51, and Cys57-Cys61. Residues 64-79 (GGGAGGAGGGAGGGSP) constitute a propeptide that is removed on maturation.

As to expression, leaves (at protein level).

Its function is as follows. Chitin-binding protein which functions in defense against chitin-containing fungal pathogens. In Moringa oleifera (Horseradish tree), this protein is Morintide mO2.